Here is a 309-residue protein sequence, read N- to C-terminus: Probable pyridoxal 5'-phosphate synthase subunit PDX1 (309 aa).

Asp-40 provides a ligand contact to D-ribose 5-phosphate. The Schiff-base intermediate with D-ribose 5-phosphate role is filled by Lys-97. Position 169 (Gly-169) interacts with D-ribose 5-phosphate. A D-glyceraldehyde 3-phosphate-binding site is contributed by Arg-181. Residues Gly-230 and 251–252 (GS) each bind D-ribose 5-phosphate.

This sequence belongs to the PdxS/SNZ family.

The catalysed reaction is aldehydo-D-ribose 5-phosphate + D-glyceraldehyde 3-phosphate + L-glutamine = pyridoxal 5'-phosphate + L-glutamate + phosphate + 3 H2O + H(+). The protein operates within cofactor biosynthesis; pyridoxal 5'-phosphate biosynthesis. Its function is as follows. Catalyzes the formation of pyridoxal 5'-phosphate from ribose 5-phosphate (RBP), glyceraldehyde 3-phosphate (G3P) and ammonia. The ammonia is provided by PDX2. Can also use ribulose 5-phosphate and dihydroxyacetone phosphate as substrates, resulting from enzyme-catalyzed isomerization of RBP and G3P, respectively. Also plays an indirect role in resistance to singlet oxygen-generating photosensitizers. The protein is Probable pyridoxal 5'-phosphate synthase subunit PDX1 (PDX1) of Hevea brasiliensis (Para rubber tree).